We begin with the raw amino-acid sequence, 778 residues long: LPS-assembly protein LptD (778 aa).

The first 23 residues, Met1 to Ala23, serve as a signal peptide directing secretion.

Belongs to the LptD family. Component of the lipopolysaccharide transport and assembly complex. Interacts with LptE and LptA.

The protein localises to the cell outer membrane. In terms of biological role, together with LptE, is involved in the assembly of lipopolysaccharide (LPS) at the surface of the outer membrane. The sequence is that of LPS-assembly protein LptD from Actinobacillus pleuropneumoniae serotype 7 (strain AP76).